The chain runs to 332 residues: Ephrin-B2a (332 aa).

A signal peptide spans 1-24; the sequence is MGDSLWRYYFGVLVIACKVNLSRA. Residues Asn20 and Asn33 are each glycosylated (N-linked (GlcNAc...) asparagine). One can recognise an Ephrin RBD domain in the interval 25–161; the sequence is LILDSIYWNT…TKSMKIIMKV (137 aa). Topologically, residues 25-225 are extracellular; that stretch reads LILDSIYWNT…VIGSEVALFA (201 aa). Intrachain disulfides connect Cys59-Cys98 and Cys86-Cys150. Asn136 is a glycosylation site (N-linked (GlcNAc...) asparagine). Residues 162 to 212 form a disordered region; sequence GQNPSDPISPKDYPTSYPPKHPDLGGKDSKSNEVLKPDASPHGEDKGDGNK. Over residues 181–210 the composition is skewed to basic and acidic residues; the sequence is KHPDLGGKDSKSNEVLKPDASPHGEDKGDG. Asn211 carries an N-linked (GlcNAc...) asparagine glycan. The helical transmembrane segment at 226 to 246 threads the bilayer; that stretch reads CIASASVIVIIIIIMLVFLLL. Residues 247–332 lie on the Cytoplasmic side of the membrane; the sequence is KYRRRHRKHS…QSPANIYYKV (86 aa). The segment at 255-285 is disordered; sequence HSPQHATTLSLSTLATPKRGGSGGNNNGSEP. Residues 260–270 show a composition bias toward low complexity; it reads ATTLSLSTLAT. A PDZ-binding motif is present at residues 330-332; the sequence is YKV.

This sequence belongs to the ephrin family. In terms of assembly, binds to the receptor tyrosine kinase ephb4. In terms of processing, inducible phosphorylation of tyrosine residues in the cytoplasmic domain.

The protein localises to the cell membrane. Functionally, cell surface transmembrane ligand for Eph receptors, a family of receptor tyrosine kinases which are crucial for migration, repulsion and adhesion during neuronal, vascular and epithelial development. Binds promiscuously Eph receptors residing on adjacent cells, leading to contact-dependent bidirectional signaling into neighboring cells. The signaling pathway downstream of the receptor is referred to as forward signaling while the signaling pathway downstream of the ephrin ligand is referred to as reverse signaling. Together with ephb4 may play a central role in heart morphogenesis and angiogenesis through regulation of cell adhesion and cell migration. The chain is Ephrin-B2a (efnb2a) from Danio rerio (Zebrafish).